Reading from the N-terminus, the 198-residue chain is Na(+)-translocating NADH-quinone reductase subunit E (198 aa).

6 consecutive transmembrane segments (helical) span residues 11–31 (SIFI…FLAV), 40–60 (GLGI…NLVF), 77–97 (FLGF…LEMF), 110–130 (GIFL…SFMV), 140–160 (VVYG…MAAI), and 176–196 (LGIT…FSGI).

It belongs to the NqrDE/RnfAE family. Composed of six subunits; NqrA, NqrB, NqrC, NqrD, NqrE and NqrF.

Its subcellular location is the cell inner membrane. It catalyses the reaction a ubiquinone + n Na(+)(in) + NADH + H(+) = a ubiquinol + n Na(+)(out) + NAD(+). In terms of biological role, NQR complex catalyzes the reduction of ubiquinone-1 to ubiquinol by two successive reactions, coupled with the transport of Na(+) ions from the cytoplasm to the periplasm. NqrA to NqrE are probably involved in the second step, the conversion of ubisemiquinone to ubiquinol. This chain is Na(+)-translocating NADH-quinone reductase subunit E, found in Tolumonas auensis (strain DSM 9187 / NBRC 110442 / TA 4).